A 159-amino-acid chain; its full sequence is Ribosomal RNA large subunit methyltransferase H (159 aa).

S-adenosyl-L-methionine-binding positions include Leu-76, Gly-108, and 127–132 (LSDMTF).

Belongs to the RNA methyltransferase RlmH family. Homodimer.

It localises to the cytoplasm. It carries out the reaction pseudouridine(1915) in 23S rRNA + S-adenosyl-L-methionine = N(3)-methylpseudouridine(1915) in 23S rRNA + S-adenosyl-L-homocysteine + H(+). Functionally, specifically methylates the pseudouridine at position 1915 (m3Psi1915) in 23S rRNA. The protein is Ribosomal RNA large subunit methyltransferase H of Acetivibrio thermocellus (strain ATCC 27405 / DSM 1237 / JCM 9322 / NBRC 103400 / NCIMB 10682 / NRRL B-4536 / VPI 7372) (Clostridium thermocellum).